A 366-amino-acid polypeptide reads, in one-letter code: Actin-like protein 8 (366 aa).

It belongs to the actin family. Strongly expressed in testis and pancreas. Weak expression in placenta.

The protein resides in the cytoplasm. Its subcellular location is the cytoskeleton. The sequence is that of Actin-like protein 8 (ACTL8) from Homo sapiens (Human).